The chain runs to 500 residues: MSEQEIFRRKSLEELKSRGIDPYPADEYIVTDYSTEIKRGFREDSPRWEVSVAGRMMSRRIMGKVSFVELQDSVGRIQLYIKCDSLCPNENKDLYYIVFKKLLDIGDFIGIKGYVFCTQTGEISIHVNSLTLLSKSLRPLPIVKSKDGMTYDSYNDVELRYRQRYVDLIVNEGTKDIFLKRTKIFNSVRSFFNEKGYIEVDTPVLQSIPGGAAARPFVTHHNALDIPCYLRIANELYLKRLIVGGFEGVYEFSRNFRNEGIDKVHNPEFTVVEVYVSYKDYKWMMNFTEQMLEHICIEILGSTELKIGEYIINFKAPYRRITMIDVIEENTGVNIAGMNENQLREVCRFLHIEEDKTMSSGKLIDEIFGKKCEWKYIQPTFIIDYPKEMSPLCKCHRQNAELTERFELIVNGFELANAYSELNDPIDQRKRFEDQLKLSKKGDNEAMFIDQDFLRALEYGMPPTSGMGIGMDRLVMLLTKQTSIQEVLLFPHMRPEKLDY.

Mg(2+)-binding residues include Glu-407 and Glu-414.

It belongs to the class-II aminoacyl-tRNA synthetase family. Homodimer. Requires Mg(2+) as cofactor.

The protein localises to the cytoplasm. It carries out the reaction tRNA(Lys) + L-lysine + ATP = L-lysyl-tRNA(Lys) + AMP + diphosphate. This is Lysine--tRNA ligase from Azobacteroides pseudotrichonymphae genomovar. CFP2.